The primary structure comprises 62 residues: Sperm protamine P1 (62 aa).

Residues 1-62 (MARYRRRSRS…RYSRRGRRRY (62 aa)) are disordered.

Belongs to the protamine P1 family. As to expression, testis.

Its subcellular location is the nucleus. It is found in the chromosome. Protamines substitute for histones in the chromatin of sperm during the haploid phase of spermatogenesis. They compact sperm DNA into a highly condensed, stable and inactive complex. In Sarcophilus harrisii (Tasmanian devil), this protein is Sperm protamine P1 (PRM1).